Reading from the N-terminus, the 480-residue chain is Amino acid permease 5 (480 aa).

Residues 1-25 (MVVQNVQDLDVLPKHSSDSFDDDGR) form a disordered region. The Cytoplasmic segment spans residues 1-31 (MVVQNVQDLDVLPKHSSDSFDDDGRPKRTGT). Over residues 11 to 25 (VLPKHSSDSFDDDGR) the composition is skewed to basic and acidic residues. The next 2 helical transmembrane spans lie at 32–52 (VWTASAHIITAVIGSGVLSLA) and 53–73 (WAVAQIGWIGGPVAMLLFSFV). At 74-120 (TFYTSTLLCSCYRSGDSVTGKRNYTYMDAIHSNLGGIKVKVCGVVQY) the chain is on the cytoplasmic side. The chain crosses the membrane as a helical span at residues 121–141 (VNLFGTAIGYTIASAISLVAI). The Extracellular segment spans residues 142–157 (QRTSCQQMNGPNDPCH). A helical membrane pass occupies residues 158-178 (VNGNVYMIAFGIVQIIFSQIP). The Cytoplasmic segment spans residues 179–182 (DFDQ). Residues 183–203 (LWWLSIVAAVMSFAYSAIGLG) traverse the membrane as a helical segment. The Extracellular portion of the chain corresponds to 204–241 (LGVSKVVENKEIKGSLTGVTVGTVTLSGTVTSSQKIWR). Residues 242-262 (TFQSLGNIAFAYSYSMILIEI) form a helical membrane-spanning segment. Topologically, residues 263–280 (QDTVKSPPAEVNTMRKAT) are cytoplasmic. The helical transmembrane segment at 281 to 301 (FVSVAVTTVFYMLCGCVGYAA) threads the bilayer. Over 302 to 328 (FGDNAPGNLLAHGGFRNPYWLLDIANL) the chain is Extracellular. The chain crosses the membrane as a helical span at residues 329–349 (AIVIHLVGAYQVYCQPLFAFV). Residues 350-383 (EKEASRRFPESEFVTKEIKIQLFPGKPFNLNLFR) lie on the Cytoplasmic side of the membrane. Residues 384–404 (LVWRTFFVMTTTLISMLMPFF) traverse the membrane as a helical segment. Residues 405-406 (ND) are Extracellular-facing. Residues 407 to 427 (VVGLLGAIGFWPLTVYFPVEM) form a helical membrane-spanning segment. Over 428–445 (YIAQKNVPRWGTKWVCLQ) the chain is Cytoplasmic. The helical transmembrane segment at 446 to 466 (VLSVTCLFVSVAAAAGSVIGI) threads the bilayer. The Extracellular segment spans residues 467–480 (VSDLKVYKPFQSEF).

The protein belongs to the amino acid/polyamine transporter 2 family. Amino acid/auxin permease (AAAP) (TC 2.A.18.2) subfamily. In terms of tissue distribution, expressed in leaves, stems, roots, siliques and flowers.

The protein resides in the cell membrane. Its activity is regulated as follows. Inhibited by 2,4-dinitrophenol. Its function is as follows. Amino acid-proton symporter. Stereospecific transporter with a broad specificity for glutamate and both neutral and basic amino acids. Reduced affinities for asparagine and valine. High affinity transport of the cationic amino acids arginine and lysine, but not of histidine. The sequence is that of Amino acid permease 5 (AAP5) from Arabidopsis thaliana (Mouse-ear cress).